Consider the following 46-residue polypeptide: Mu-segestritoxin-Sf1h (46 aa).

Cystine bridges form between cysteine 3–cysteine 19, cysteine 10–cysteine 22, cysteine 18–cysteine 42, and cysteine 24–cysteine 40. Positions arginine 31–tryptophan 33 are keys region for toxin activity.

It belongs to the neurotoxin 16 (SFI) family. In terms of tissue distribution, expressed by the venom gland.

The protein resides in the secreted. In terms of biological role, insecticidal toxin. It inhibits insect voltage-gated sodium channels (Nav) by partially blocking the channel pore in DUM neurons from the American cockroach, not by acting as a gating modifier. The inhibition is only partially reversible after prolonged washout. In vivo, the toxin causes flaccid paralysis followed by death when injected into Heliothis virescens larvae. It also causes uncoordinated movements followed by full paralysis to sheep blowflies (Lucilia cuprina). When the toxin is fused to snowdrop lectin, it is orally active against larvae of the tomato moth (Laconobia oleracea), the rice brown planthopper (Nilaparvata lugens), and the peach-potato aphid (Myzus persicae). This Segestria florentina (Tube-web spider) protein is Mu-segestritoxin-Sf1h.